A 171-amino-acid polypeptide reads, in one-letter code: Large ribosomal subunit protein uL10 (171 aa).

Belongs to the universal ribosomal protein uL10 family. Part of the ribosomal stalk of the 50S ribosomal subunit. The N-terminus interacts with L11 and the large rRNA to form the base of the stalk. The C-terminus forms an elongated spine to which L12 dimers bind in a sequential fashion forming a multimeric L10(L12)X complex.

Its function is as follows. Forms part of the ribosomal stalk, playing a central role in the interaction of the ribosome with GTP-bound translation factors. The chain is Large ribosomal subunit protein uL10 from Lactococcus lactis subsp. cremoris (strain SK11).